Reading from the N-terminus, the 306-residue chain is N-acetylmuramic acid 6-phosphate etherase (306 aa).

In terms of domain architecture, SIS spans 59–222; the sequence is TAQALGRGGR…STGVMVCLGK (164 aa). Glu-87 acts as the Proton donor in catalysis. Glu-118 is a catalytic residue.

It belongs to the GCKR-like family. MurNAc-6-P etherase subfamily. In terms of assembly, homodimer.

The enzyme catalyses N-acetyl-D-muramate 6-phosphate + H2O = N-acetyl-D-glucosamine 6-phosphate + (R)-lactate. Its pathway is amino-sugar metabolism; N-acetylmuramate degradation. Its function is as follows. Specifically catalyzes the cleavage of the D-lactyl ether substituent of MurNAc 6-phosphate, producing GlcNAc 6-phosphate and D-lactate. The protein is N-acetylmuramic acid 6-phosphate etherase of Rippkaea orientalis (strain PCC 8801 / RF-1) (Cyanothece sp. (strain PCC 8801)).